A 1613-amino-acid polypeptide reads, in one-letter code: Vitellogenin-2 (1613 aa).

The N-terminal stretch at 1–15 (MRSIIIASLVALALA) is a signal peptide. Residues 24–687 (FEPKTDYHYK…EKNSFLPKDL (664 aa)) form the Vitellogenin domain. Residue Asn1268 is glycosylated (N-linked (GlcNAc...) asparagine). Positions 1308–1477 (SVCKVQKNQI…SYLLKNEECE (170 aa)) constitute a VWFD domain. 2 cysteine pairs are disulfide-bonded: Cys1310/Cys1440 and Cys1332/Cys1476. Residues 1491 to 1531 (KYERDEEQSDEYSSEETYDYEQENTKKSQKNQRSQKKSDLV) form a disordered region. Over residues 1495–1512 (DEEQSDEYSSEETYDYEQ) the composition is skewed to acidic residues.

As to expression, expressed in the intestine of adult hermaphrodites.

The protein localises to the secreted. In terms of biological role, precursor of the egg-yolk proteins that are sources of nutrients during embryonic development. Together with other vitellogenins, may play a role in modulating life-span, acting via induction of autophagy and lysosomal lipolysis. This Caenorhabditis elegans protein is Vitellogenin-2 (vit-2).